Consider the following 77-residue polypeptide: Subtilisin-chymotrypsin inhibitor CI-1C (77 aa).

The protein belongs to the protease inhibitor I13 (potato type I serine protease inhibitor) family.

In terms of biological role, inhibits both subtilisin and chymotrypsin. The sequence is that of Subtilisin-chymotrypsin inhibitor CI-1C from Hordeum vulgare (Barley).